The following is a 268-amino-acid chain: Testis-specific serine/threonine-protein kinase 3 (268 aa).

The 256-residue stretch at 10-265 (YQLGKTIGEG…IEEVSWHPWL (256 aa)) folds into the Protein kinase domain. ATP contacts are provided by residues 16–24 (IGEGTYSKV) and Lys-39. The active-site Proton acceptor is Asp-134. A Phosphoserine; by autocatalysis modification is found at Ser-166. The residue at position 168 (Thr-168) is a Phosphothreonine; by PDPK1.

Belongs to the protein kinase superfamily. CAMK Ser/Thr protein kinase family. Requires Mg(2+) as cofactor. Mn(2+) is required as a cofactor. Autophosphorylated at Ser-166. Phosphorylation at Thr-168 by PDPK1 activates the serine/threonine protein kinase activity. In terms of tissue distribution, developmentally expressed in testicular germ cells. In adult testis, expression was detected in round and condensing spermatids, but not in meiotic pachytene spermatocytes. Not expressed in brain, ovary, kidney, liver or early embryonic cells.

Its subcellular location is the cell projection. The protein localises to the cilium. The protein resides in the flagellum. It carries out the reaction L-seryl-[protein] + ATP = O-phospho-L-seryl-[protein] + ADP + H(+). The catalysed reaction is L-threonyl-[protein] + ATP = O-phospho-L-threonyl-[protein] + ADP + H(+). With respect to regulation, activated by phosphorylation on Thr-168 by PDPK1. Functionally, serine/threonine protein kinase required for spermatid development and male fertility. This is Testis-specific serine/threonine-protein kinase 3 from Mus musculus (Mouse).